The sequence spans 106 residues: UPF0145 protein BF0270 (106 aa).

This sequence belongs to the UPF0145 family.

This is UPF0145 protein BF0270 from Bacteroides fragilis (strain YCH46).